The primary structure comprises 496 residues: Probable cytosol aminopeptidase (496 aa).

2 residues coordinate Mn(2+): K261 and D266. Residue K273 is part of the active site. Residues D284, D343, and E345 each coordinate Mn(2+). R347 is a catalytic residue.

This sequence belongs to the peptidase M17 family. The cofactor is Mn(2+).

It localises to the cytoplasm. It catalyses the reaction Release of an N-terminal amino acid, Xaa-|-Yaa-, in which Xaa is preferably Leu, but may be other amino acids including Pro although not Arg or Lys, and Yaa may be Pro. Amino acid amides and methyl esters are also readily hydrolyzed, but rates on arylamides are exceedingly low.. The enzyme catalyses Release of an N-terminal amino acid, preferentially leucine, but not glutamic or aspartic acids.. Presumably involved in the processing and regular turnover of intracellular proteins. Catalyzes the removal of unsubstituted N-terminal amino acids from various peptides. In Bacillus licheniformis (strain ATCC 14580 / DSM 13 / JCM 2505 / CCUG 7422 / NBRC 12200 / NCIMB 9375 / NCTC 10341 / NRRL NRS-1264 / Gibson 46), this protein is Probable cytosol aminopeptidase.